Reading from the N-terminus, the 156-residue chain is MGASVKPAARRNARQFALQAIYSWQITKENVATIEEQFLTSGKYDEEEHRAAEPALAAPETDVSYFRDLLAGVVLNHNELDSKLRPFVSRPMQDLDMMELALLRLAMYEMTRREDVPYKVVINEAIELAKVFAAEDSHKFVNGVLDKAAPHVRKKA.

This sequence belongs to the NusB family.

Functionally, involved in transcription antitermination. Required for transcription of ribosomal RNA (rRNA) genes. Binds specifically to the boxA antiterminator sequence of the ribosomal RNA (rrn) operons. The chain is Transcription antitermination protein NusB from Vibrio cholerae serotype O1 (strain ATCC 39541 / Classical Ogawa 395 / O395).